The chain runs to 426 residues: Torsin-4A (426 aa).

The interval 41–60 (QPGTEPDSGTGTLGPTGSLG) is disordered. The segment covering 48–60 (SGTGTLGPTGSLG) has biased composition (low complexity). Residues Ser58 and Ser76 each carry the phosphoserine modification. The residue at position 84 (Thr84) is a Phosphothreonine. A Phosphoserine modification is found at Ser101. The helical transmembrane segment at 117–133 (CLLLLVAIVGFQVLNAI) threads the bilayer. ATP is bound at residue 189–196 (GPSGVGKS).

It belongs to the ClpA/ClpB family. Torsin subfamily.

Its subcellular location is the membrane. The polypeptide is Torsin-4A (Tor4a) (Mus musculus (Mouse)).